The sequence spans 374 residues: Erythronate-4-phosphate dehydrogenase (374 aa).

Residues S53 and T75 each contribute to the substrate site. NAD(+) is bound at residue D160. R222 is a catalytic residue. Position 246 (D246) interacts with NAD(+). Residue E251 is part of the active site. H268 (proton donor) is an active-site residue. Residue G271 participates in NAD(+) binding. Y272 provides a ligand contact to substrate.

The protein belongs to the D-isomer specific 2-hydroxyacid dehydrogenase family. PdxB subfamily. In terms of assembly, homodimer.

The protein resides in the cytoplasm. It catalyses the reaction 4-phospho-D-erythronate + NAD(+) = (R)-3-hydroxy-2-oxo-4-phosphooxybutanoate + NADH + H(+). It participates in cofactor biosynthesis; pyridoxine 5'-phosphate biosynthesis; pyridoxine 5'-phosphate from D-erythrose 4-phosphate: step 2/5. Its function is as follows. Catalyzes the oxidation of erythronate-4-phosphate to 3-hydroxy-2-oxo-4-phosphonooxybutanoate. This Psychrobacter sp. (strain PRwf-1) protein is Erythronate-4-phosphate dehydrogenase.